A 211-amino-acid chain; its full sequence is FMN-dependent NADH:quinone oxidoreductase 2 (211 aa).

FMN-binding positions include S10 and 17-19 (SRS).

Belongs to the azoreductase type 1 family. As to quaternary structure, homodimer. Requires FMN as cofactor.

The catalysed reaction is 2 a quinone + NADH + H(+) = 2 a 1,4-benzosemiquinone + NAD(+). It catalyses the reaction N,N-dimethyl-1,4-phenylenediamine + anthranilate + 2 NAD(+) = 2-(4-dimethylaminophenyl)diazenylbenzoate + 2 NADH + 2 H(+). In terms of biological role, quinone reductase that provides resistance to thiol-specific stress caused by electrophilic quinones. Also exhibits azoreductase activity. Catalyzes the reductive cleavage of the azo bond in aromatic azo compounds to the corresponding amines. The polypeptide is FMN-dependent NADH:quinone oxidoreductase 2 (Listeria innocua serovar 6a (strain ATCC BAA-680 / CLIP 11262)).